Reading from the N-terminus, the 829-residue chain is MAELENRKQFAQMLAPGVKTLKLHPDYKVRRKKNEKTGQSYIDKIALQLGVSPNTIKSWIGQMGANYIPGRIDDGKLFGMIWIILEKTDLDIEWLTDLLEATTIPVIKPALPVWAASCLKKAKILRKDGLFGAPSEGEIENVVKRLFHDRPGQETNALTEQPITHNLPSRWSGRFIGRSFDMEAIRQWMLSPSPVCLITGWAGMGKTTIALEAAYSCVDDTSVWPAFNSIIWVSADWKGLSFSDFLNTIAYQLGRKEQIDKSINVKRFVVRNALANYTREKPILLIVDSIDTAERDIHEFITSLPQGVKVLLTARENVKQTYRESFGEMTAIQLSGLDQTDAHEFFQQEVHHCLQTCNLPRKREKLEQLLHLSSDLKNEFISATAGNPKAMALSIAYMSDDDIPAQQLIHELGKAGYSLLELFEFLFGRTWDRCNEDTRKLWQTLCFFSKPPDEKSLAAAAGLDARRFHYAMEQMRSYALIQPERSQGRTQYLAHQTVVAYGEQHLSEQHEYEKEARNRWAHYYIDYAETHLKREQPNSIYWSYLLGRNLDQMKQEWPNILKVIQWASETEQKEILIELITRISHFLSRINLPLRIEYGRKAADAAHHLGQHTREAYFRIDTSGWALMEVNDLDGALQQIEAGLKILEQSDAHDAYDLKVWGHALKARLFLKDGQQEKAETILNEIENQPISPTIQHRVLLVRGDLSFARGYHVEAIQLYEAANEISSTYGGEKTIEAYFNLGVAYVKCDQFEKAEEAFEQMLYDKHNANQVELIYYHYGMAQLLYRKGEKTKAVESNQKAIRLIDSWEPAIGIRGEVERLARATKENE.

Positions Ile-42–Gly-61 form a DNA-binding region, H-T-H motif. Position 200-207 (Gly-200–Thr-207) interacts with ATP. 3 TPR repeats span residues His-697 to Tyr-730, Ile-736 to Ala-769, and Ile-775 to Trp-808.

In terms of biological role, activator of the glucitol dehydrogenase gene (gutB). This Bacillus subtilis (strain 168) protein is Transcription activator GutR (gutR).